Consider the following 60-residue polypeptide: Toxin S4C8 (60 aa).

4 cysteine pairs are disulfide-bonded: C3-C22, C17-C39, C41-C52, and C53-C58. The segment at 41–48 (CPTAMWPY) is important for binding to L-type calcium channels.

The protein belongs to the three-finger toxin family. Short-chain subfamily. L-type calcium blocker sub-subfamily. Expressed by the venom gland.

Its subcellular location is the secreted. Functionally, this specific blocker of the L-type calcium channel (Cav1/CACNA1) is a smooth muscle relaxant and an inhibitor of cardiac contractions. The polypeptide is Toxin S4C8 (Dendroaspis jamesoni kaimosae (Eastern Jameson's mamba)).